The primary structure comprises 407 residues: Peptidase T (407 aa).

Histidine 82 is a Zn(2+) binding site. Residue aspartate 84 is part of the active site. A Zn(2+)-binding site is contributed by aspartate 143. The active-site Proton acceptor is glutamate 177. Residues glutamate 178, aspartate 200, and histidine 382 each coordinate Zn(2+).

It belongs to the peptidase M20B family. Zn(2+) serves as cofactor.

It localises to the cytoplasm. The enzyme catalyses Release of the N-terminal residue from a tripeptide.. Cleaves the N-terminal amino acid of tripeptides. The sequence is that of Peptidase T from Streptococcus pyogenes serotype M49 (strain NZ131).